The chain runs to 697 residues: Potassium-transporting ATPase ATP-binding subunit (697 aa).

A run of 4 helical transmembrane segments spans residues 55–75, 79–99, 245–265, and 271–291; these read PIMF…FLPS, SIPG…VLFA, LTLI…YLGF, and VLVA…LSAI. Residue aspartate 324 is the 4-aspartylphosphate intermediate of the active site. ATP contacts are provided by residues aspartate 361, glutamate 365, 393-400, and lysine 412; that span reads FKAETRMS. Residues aspartate 535 and aspartate 539 each contribute to the Mg(2+) site. The next 3 membrane-spanning stretches (helical) occupy residues 605-625, 633-653, and 677-697; these read FAII…LNIM, AILS…PLAM, and GGVI…GLFI.

This sequence belongs to the cation transport ATPase (P-type) (TC 3.A.3) family. Type IA subfamily. In terms of assembly, the system is composed of three essential subunits: KdpA, KdpB and KdpC.

Its subcellular location is the cell membrane. It carries out the reaction K(+)(out) + ATP + H2O = K(+)(in) + ADP + phosphate + H(+). In terms of biological role, part of the high-affinity ATP-driven potassium transport (or Kdp) system, which catalyzes the hydrolysis of ATP coupled with the electrogenic transport of potassium into the cytoplasm. This subunit is responsible for energy coupling to the transport system and for the release of the potassium ions to the cytoplasm. This is Potassium-transporting ATPase ATP-binding subunit from Bacillus cereus (strain ATCC 14579 / DSM 31 / CCUG 7414 / JCM 2152 / NBRC 15305 / NCIMB 9373 / NCTC 2599 / NRRL B-3711).